We begin with the raw amino-acid sequence, 293 residues long: 4-hydroxy-tetrahydrodipicolinate synthase (293 aa).

Threonine 44 serves as a coordination point for pyruvate. The active-site Proton donor/acceptor is tyrosine 132. The active-site Schiff-base intermediate with substrate is the lysine 160. Isoleucine 202 contacts pyruvate.

It belongs to the DapA family. As to quaternary structure, homotetramer; dimer of dimers.

The protein localises to the cytoplasm. It catalyses the reaction L-aspartate 4-semialdehyde + pyruvate = (2S,4S)-4-hydroxy-2,3,4,5-tetrahydrodipicolinate + H2O + H(+). It functions in the pathway amino-acid biosynthesis; L-lysine biosynthesis via DAP pathway; (S)-tetrahydrodipicolinate from L-aspartate: step 3/4. Functionally, catalyzes the condensation of (S)-aspartate-beta-semialdehyde [(S)-ASA] and pyruvate to 4-hydroxy-tetrahydrodipicolinate (HTPA). This is 4-hydroxy-tetrahydrodipicolinate synthase from Pelagibacter ubique (strain HTCC1062).